Here is a 298-residue protein sequence, read N- to C-terminus: Arginine/serine-rich protein 1 (298 aa).

The disordered stretch occupies residues 1–135 (MSSAAMSKYV…SRSRSRGRSQ (135 aa)). Ser17 bears the Phosphoserine mark. Residues 23–36 (SPSTSGSGRSSRLS) show a composition bias toward low complexity. Over residues 60 to 105 (SRSHSRPRRSRRSRSRSRRRHQRKYRRYSRSYSRSRSRSRSHRYHR) the composition is skewed to basic residues. A phosphoserine mark is found at Ser118 and Ser120. A compositionally biased stretch (basic residues) spans 124–135 (SRSRSRSRGRSQ). Arg145 is subject to Omega-N-methylarginine. Disordered stretches follow at residues 161-181 (RPRW…TPFR) and 218-298 (ASQG…WIPV). The segment covering 219–228 (SQGTAVSSSG) has biased composition (polar residues). A compositionally biased stretch (basic and acidic residues) spans 230 to 246 (KVEHSEKQTEDATKNTS). A compositionally biased stretch (polar residues) spans 247-271 (EKSSTQRNIAFSSNNSVAKPLQKTT). Residues 274–289 (AVEEKSSGSPKIDKKK) are compositionally biased toward basic and acidic residues. A Phosphoserine modification is found at Ser282.

Belongs to the RSRP family. In terms of processing, phosphorylated. Phosphorylation at Ser-118 and Ser-120 mediates the interaction with spliceosome proteins.

The protein resides in the nucleus. Its function is as follows. Probably acts as a spliceosomal factor that contributes to spliceosome assembly and regulates the isoform switching of proteins such as PARP6. This chain is Arginine/serine-rich protein 1 (Rsrp1), found in Mus musculus (Mouse).